Consider the following 412-residue polypeptide: Imidazolonepropionase (412 aa).

Fe(3+)-binding residues include His-76 and His-78. His-76 and His-78 together coordinate Zn(2+). Positions 85, 148, and 181 each coordinate 4-imidazolone-5-propanoate. Residue Tyr-148 participates in N-formimidoyl-L-glutamate binding. Position 242 (His-242) interacts with Fe(3+). Zn(2+) is bound at residue His-242. 4-imidazolone-5-propanoate is bound at residue Glu-245. Fe(3+) is bound at residue Asp-317. Residue Asp-317 coordinates Zn(2+). N-formimidoyl-L-glutamate is bound by residues Asn-319 and Gly-321. A 4-imidazolone-5-propanoate-binding site is contributed by Ser-322.

It belongs to the metallo-dependent hydrolases superfamily. HutI family. Zn(2+) is required as a cofactor. The cofactor is Fe(3+).

It is found in the cytoplasm. The catalysed reaction is 4-imidazolone-5-propanoate + H2O = N-formimidoyl-L-glutamate. It participates in amino-acid degradation; L-histidine degradation into L-glutamate; N-formimidoyl-L-glutamate from L-histidine: step 3/3. Catalyzes the hydrolytic cleavage of the carbon-nitrogen bond in imidazolone-5-propanoate to yield N-formimidoyl-L-glutamate. It is the third step in the universal histidine degradation pathway. The polypeptide is Imidazolonepropionase (Staphylococcus aureus (strain Mu50 / ATCC 700699)).